A 380-amino-acid polypeptide reads, in one-letter code: MDSGCWLFGGEFEDSVFEERPERRSGPPASYCAKLCEPQWFYEETESSDDVEVLTLKKFKGDLAYRRQEYQKALQEYSSISEKLSSTNFAMKRDVQEGQARCLAHLGRHMEALEIAANLENKATNTDHLTTVLYLQLAICSSLQNLEKTIFCLQKLISLHPFNPWNWGKLAEAYLNLGPALSAALASSQKQHSFTSSDKTIKSFFPHSGKDCLLCFPETLPESSLFSVEANSSNSQKNEKALTNIQNCMAEKRETVLIETQLKACASFIRTRLLLQFTQPQQTSFALERNLRTQQEIEDKMKGFSFKEDTLLLIAEVMGEDIPEKIKDEVHPEVKCVGSVALTALVTVSSEEFEDKWFRKIKDHFCPFENQFHTEIQILA.

This is an uncharacterized protein from Homo sapiens (Human).